Here is a 1225-residue protein sequence, read N- to C-terminus: MIVEVELGFLLSTLFFTIISIILFYFFINNKNNLIDQCQEVTKLNNKDNKIVNNNNNNYNNNNFNKIEEINDDKNKEIIKLINNSNNKNLKIKIQEIDSGNNNNNNNNNNNNNNNNLNKNSNEIFRNFKIFSGSLLVIDQDLNIISSSESVRDIFSNINDINGVNQQVIGSLQNYSFINLVHQKDKDRVSTFLKLKFKNNNNIKHQQFSEDIINEKDELKEIQIEDNKELIIINNNNNNNNDNVLKFGNNNSNNSSIILFQGVYHLNNTDLSKPFNLQVSILPFISENYIVLSLKDLSPPPLRLLLNKTSSALSPRSLSSSSSSSPSSSNNNGNTNNSGSLSPRSSNSNGSAVSPRNVSSNSMSPRGQNSDRSISSPRGSSSSSSSSSNELAISPRNSNGTISSPRTSNLSIESVLNNKSIDMISHLSHELRTPIHSVIASIQLFRSTILTVTQNEYLSIIDTSANTLLELVSNVLDYKRIRSGKLTLNNVDFNLCHVIEDVCAMVSPQAQAKSLQIASFIFIHCPLSFYGDPIRLRQVLLNLIGNGLKYTNKGQVCISVEPEQVNEHCMYLHFQVKDSGIGIKEENMSKLFAGFSQVNNGGTTQEALGSGLGLAISKDLVELMGGKIWCSSNATQNNGEAGCTFHFVIPLETNPKQLPCPIQNFNGLSVLVVDKNPYIQTVLCQYLEGWNCQVIKSSDIKEASNKLKDLRREQIEVVMIDIDNIDFRDFIQFKDAFNRLEFGRIGLITMSSDRSMVNEMGFGTSKLTKPFRQSHLVACLLASMPEHSSSTTNCFSNIVGMNSNINNNNNINNNSNNNNNNMQTHNSNSVYGNGNYGNCTPFSNNNNRIHMMSSGDKPSINNRRMSISLGKIPTFNSGGSNSPRSKKLFEEVLQQQQLQQQLQQQLQQQQQLQQQQQQQQQQQQQQQQQLQQQQQQLNTIDDDSNNYCNTTGTMDSIDEINKNNYSDSESDELNDDQAPIIAPVQQLSFGRVTRRHSIDIIMFENSRELSELRNLEDSTRYLSPRSMNNNNGNNDNGINGGSGNSLFGSSIKEEIGGTSDTSSLAQSPNSLSPRAPTKIMILDDNPVSLKLMQRILESRGFECYPFDCSEKAVAQLDQVNPAIIFMDCEMPKMNGFECTQLIRKREQESLCLLKDRKIIIALTAHINPEIQVKCFDAGMNDFISKPFKPQCLELILRKWEDCISNNQLNYNNSLINNQTTIQEQV.

A helical membrane pass occupies residues 8–28 (GFLLSTLFFTIISIILFYFFI). Low complexity predominate over residues 313–356 (LSPRSLSSSSSSSPSSSNNNGNTNNSGSLSPRSSNSNGSAVSPR). The segment at 313-407 (LSPRSLSSSS…SNGTISSPRT (95 aa)) is disordered. Over residues 357-368 (NVSSNSMSPRGQ) the composition is skewed to polar residues. The segment covering 370–388 (SDRSISSPRGSSSSSSSSS) has biased composition (low complexity). Residues 389 to 407 (NELAISPRNSNGTISSPRT) show a composition bias toward polar residues. A Histidine kinase domain is found at 426-653 (HLSHELRTPI…TFHFVIPLET (228 aa)). H429 carries the phosphohistidine; by autocatalysis modification. The 116-residue stretch at 669-784 (SVLVVDKNPY…HLVACLLASM (116 aa)) folds into the Response regulatory 1 domain. D721 carries the 4-aspartylphosphate modification. Disordered regions lie at residues 809 to 832 (NNIN…SVYG), 941 to 974 (DDDS…DELN), and 1021 to 1076 (YLSP…PRAP). The segment covering 945 to 954 (NNYCNTTGTM) has biased composition (polar residues). Over residues 1023–1037 (SPRSMNNNNGNNDNG) the composition is skewed to low complexity. Polar residues predominate over residues 1058–1072 (TSDTSSLAQSPNSLS). Residues 1078 to 1200 (KIMILDDNPV…CLELILRKWE (123 aa)) enclose the Response regulatory 2 domain. At D1127 the chain carries 4-aspartylphosphate.

The protein resides in the membrane. The catalysed reaction is ATP + protein L-histidine = ADP + protein N-phospho-L-histidine.. In terms of biological role, acts in a signal transduction pathway that regulates the slug versus culmination choice. Believed to be the first component of a phosphorelay that couples the sensing of ammonia to the modulation of PKA activity and hence activates culmination and spore germination. Ammonium transporters amtA and amtC are thought to respectively activate and inhibit dhkC phosphorelay. This protein probably undergoes an ATP-dependent autophosphorylation at conserved His residue in the kinase core, and a phosphoryl group is then transferred to a conserved aspartate residue in the receiver domain. This Dictyostelium discoideum (Social amoeba) protein is Hybrid signal transduction histidine kinase C (dhkC).